Here is a 49-residue protein sequence, read N- to C-terminus: uncharacterized protein (49 aa).

The helical transmembrane segment at 23-43 (LYVISFVLFIVLFFGMFFKLI) threads the bilayer.

It is found in the host membrane. This is an uncharacterized protein from Spiroplasma melliferum (SpV1).